The chain runs to 1317 residues: ABC transporter C family member 14 (1317 aa).

The 286-residue stretch at asparagine 119 to glycine 404 folds into the ABC transmembrane type-1 1 domain. 5 helical membrane-spanning segments follow: residues isoleucine 127–isoleucine 147, serine 156–isoleucine 176, isoleucine 249–glycine 269, valine 341–serine 361, and leucine 375–leucine 395. Residues glutamate 426–aspartate 451 are disordered. Low complexity predominate over residues asparagine 427–asparagine 449. The ABC transporter 1 domain occupies glutamate 490–isoleucine 710. Glycine 522–threonine 529 lines the ATP pocket. Transmembrane regions (helical) follow at residues tyrosine 734–glycine 754, aspartate 778–isoleucine 798, leucine 871–isoleucine 891, leucine 969–serine 989, and glycine 992–valine 1012. In terms of domain architecture, ABC transmembrane type-1 2 spans leucine 744 to arginine 1027. The 236-residue stretch at isoleucine 1071–lysine 1306 folds into the ABC transporter 2 domain. Glycine 1105–threonine 1112 is a binding site for ATP.

Belongs to the ABC transporter superfamily. ABCC family. Conjugate transporter (TC 3.A.1.208) subfamily.

It is found in the membrane. The polypeptide is ABC transporter C family member 14 (abcC14) (Dictyostelium discoideum (Social amoeba)).